Reading from the N-terminus, the 542-residue chain is Bifunctional NAD(P)H-hydrate repair enzyme Nnr (542 aa).

Residues 1 to 243 (MASSDAEALC…PFVLDRAAEK (243 aa)) are NAD(P)H-hydrate epimerase. A YjeF N-terminal domain is found at 19-238 (MQAADRYTIE…DIGMPPFVLD (220 aa)). The segment at 69–73 (NNGGD) is NADPHX 1; for epimerase activity. Residues N70 and D148 each coordinate K(+). Residues 152-158 (GTGLTSD) are NADPHX 1; for epimerase activity. (6S)-NADPHX is bound at residue D181. Position 184 (T184) interacts with K(+). The YjeF C-terminal domain occupies 251 to 534 (TDAAVRAWWP…DMIPRVAAER (284 aa)). The tract at residues 251-542 (TDAAVRAWWP…ERFGEGRRQR (292 aa)) is ADP-dependent (S)-NAD(P)H-hydrate dehydratase. G358 contacts (6S)-NADPHX. Residues 410 to 416 (HAGEFRR) are NADPHX 2; for dehydratase activity. ADP is bound by residues 445–449 (KGMPS) and 465–474 (TPALATAGTG). D475 serves as a coordination point for (6S)-NADPHX.

In the N-terminal section; belongs to the NnrE/AIBP family. The protein in the C-terminal section; belongs to the NnrD/CARKD family. Requires K(+) as cofactor.

The catalysed reaction is (6S)-NADHX + ADP = AMP + phosphate + NADH + H(+). It catalyses the reaction (6S)-NADPHX + ADP = AMP + phosphate + NADPH + H(+). It carries out the reaction (6R)-NADHX = (6S)-NADHX. The enzyme catalyses (6R)-NADPHX = (6S)-NADPHX. Its function is as follows. Bifunctional enzyme that catalyzes the epimerization of the S- and R-forms of NAD(P)HX and the dehydration of the S-form of NAD(P)HX at the expense of ADP, which is converted to AMP. This allows the repair of both epimers of NAD(P)HX, a damaged form of NAD(P)H that is a result of enzymatic or heat-dependent hydration. The chain is Bifunctional NAD(P)H-hydrate repair enzyme Nnr (nnr) from Salinibacter ruber (strain DSM 13855 / M31).